Here is a 505-residue protein sequence, read N- to C-terminus: Apolipoprotein N-acyltransferase (505 aa).

A run of 6 helical transmembrane segments spans residues 23–43 (LLAL…AVLY), 58–78 (GWWF…VSMN), 85–105 (PLLA…FFAL), 125–145 (LCFA…LTGF), 162–182 (LAPL…AALL), and 192–212 (PSFL…GLAL). Residues 230–469 (IQGNVEQDLK…QAVLYGEVVP (240 aa)) enclose the CN hydrolase domain. Glu269 (proton acceptor) is an active-site residue. Lys329 is an active-site residue. Cys381 functions as the Nucleophile in the catalytic mechanism. A helical membrane pass occupies residues 482–502 (WPLAIVCALLLGWALLAGRIA).

Belongs to the CN hydrolase family. Apolipoprotein N-acyltransferase subfamily.

It is found in the cell inner membrane. It carries out the reaction N-terminal S-1,2-diacyl-sn-glyceryl-L-cysteinyl-[lipoprotein] + a glycerophospholipid = N-acyl-S-1,2-diacyl-sn-glyceryl-L-cysteinyl-[lipoprotein] + a 2-acyl-sn-glycero-3-phospholipid + H(+). Its pathway is protein modification; lipoprotein biosynthesis (N-acyl transfer). In terms of biological role, catalyzes the phospholipid dependent N-acylation of the N-terminal cysteine of apolipoprotein, the last step in lipoprotein maturation. This Pseudomonas putida (strain ATCC 47054 / DSM 6125 / CFBP 8728 / NCIMB 11950 / KT2440) protein is Apolipoprotein N-acyltransferase.